The following is a 242-amino-acid chain: Type III pantothenate kinase (242 aa).

7-14 (DLGNSRFK) serves as a coordination point for ATP. Substrate contacts are provided by residues Tyr91 and 98–101 (GVDR). The Proton acceptor role is filled by Asp100. An ATP-binding site is contributed by Thr121. A substrate-binding site is contributed by Thr171.

It belongs to the type III pantothenate kinase family. In terms of assembly, homodimer. NH4(+) is required as a cofactor. It depends on K(+) as a cofactor.

The protein resides in the cytoplasm. It carries out the reaction (R)-pantothenate + ATP = (R)-4'-phosphopantothenate + ADP + H(+). Its pathway is cofactor biosynthesis; coenzyme A biosynthesis; CoA from (R)-pantothenate: step 1/5. Catalyzes the phosphorylation of pantothenate (Pan), the first step in CoA biosynthesis. The chain is Type III pantothenate kinase from Xanthomonas campestris pv. campestris (strain B100).